We begin with the raw amino-acid sequence, 342 residues long: Probable dual-specificity RNA methyltransferase RlmN (342 aa).

The active-site Proton acceptor is the Glu-91. Positions 97–327 (YRYGNTVCLS…VTVRRELGDE (231 aa)) constitute a Radical SAM core domain. The cysteines at positions 104 and 332 are disulfide-linked. Residues Cys-111, Cys-115, and Cys-118 each contribute to the [4Fe-4S] cluster site. S-adenosyl-L-methionine contacts are provided by residues 158–159 (GE), Ser-190, 213–215 (SLH), and Asn-289. Cys-332 functions as the S-methylcysteine intermediate in the catalytic mechanism.

It belongs to the radical SAM superfamily. RlmN family. [4Fe-4S] cluster serves as cofactor.

It is found in the cytoplasm. The enzyme catalyses adenosine(2503) in 23S rRNA + 2 reduced [2Fe-2S]-[ferredoxin] + 2 S-adenosyl-L-methionine = 2-methyladenosine(2503) in 23S rRNA + 5'-deoxyadenosine + L-methionine + 2 oxidized [2Fe-2S]-[ferredoxin] + S-adenosyl-L-homocysteine. The catalysed reaction is adenosine(37) in tRNA + 2 reduced [2Fe-2S]-[ferredoxin] + 2 S-adenosyl-L-methionine = 2-methyladenosine(37) in tRNA + 5'-deoxyadenosine + L-methionine + 2 oxidized [2Fe-2S]-[ferredoxin] + S-adenosyl-L-homocysteine. In terms of biological role, specifically methylates position 2 of adenine 2503 in 23S rRNA and position 2 of adenine 37 in tRNAs. The sequence is that of Probable dual-specificity RNA methyltransferase RlmN from Carboxydothermus hydrogenoformans (strain ATCC BAA-161 / DSM 6008 / Z-2901).